The sequence spans 241 residues: Probable histone-lysine N-methyltransferase set-23 (241 aa).

Residues 25 to 85 form the Pre-SET domain; sequence QGCDCETQCS…SCRNKVVQNG (61 aa). Residues C27, C29, C33, C39, C41, C64, C68, C70, and C77 each coordinate Zn(2+). One can recognise an SET domain in the interval 88-210; sequence KKLKIFSTSE…VGEELSYDYG (123 aa). Residues 98–100, D138, Y140, R167, and 170–171 each bind S-adenosyl-L-methionine; these read KGD and NH. Residues C173, C222, C224, and C229 each contribute to the Zn(2+) site. Residues 218 to 234 enclose the Post-SET domain; that stretch reads NRKLCLCRSENCRKYLP.

Belongs to the class V-like SAM-binding methyltransferase superfamily. Histone-lysine methyltransferase family. Suvar3-9 subfamily.

It localises to the nucleus. The protein resides in the chromosome. The enzyme catalyses L-lysyl-[histone] + S-adenosyl-L-methionine = N(6)-methyl-L-lysyl-[histone] + S-adenosyl-L-homocysteine + H(+). In terms of biological role, probable histone methyltransferase required for embryonic development. This is Probable histone-lysine N-methyltransferase set-23 from Caenorhabditis briggsae.